The primary structure comprises 307 residues: N-acetylmuramic acid 6-phosphate etherase (307 aa).

Residues 59–222 enclose the SIS domain; that stretch reads TTKALSQGGK…STGVMVRLGK (164 aa). Catalysis depends on E87, which acts as the Proton donor. Residue E118 is part of the active site.

The protein belongs to the GCKR-like family. MurNAc-6-P etherase subfamily. As to quaternary structure, homodimer.

It carries out the reaction N-acetyl-D-muramate 6-phosphate + H2O = N-acetyl-D-glucosamine 6-phosphate + (R)-lactate. Its pathway is amino-sugar metabolism; N-acetylmuramate degradation. Its function is as follows. Specifically catalyzes the cleavage of the D-lactyl ether substituent of MurNAc 6-phosphate, producing GlcNAc 6-phosphate and D-lactate. The protein is N-acetylmuramic acid 6-phosphate etherase of Trichodesmium erythraeum (strain IMS101).